A 485-amino-acid chain; its full sequence is Probable WRKY transcription factor 10 (485 aa).

2 disordered regions span residues Ile43–Gly62 and Ile215–Gln293. A compositionally biased stretch (acidic residues) spans Ser216 to Ala264. Residues Ser301–Pro366 constitute a DNA-binding region (WRKY). Zn(2+) contacts are provided by Cys332, Cys337, His361, and His363. Positions Asp358–Met417 are disordered. A compositionally biased stretch (low complexity) spans Ala368–Ala380. A compositionally biased stretch (pro residues) spans Pro399 to Ser411.

Belongs to the WRKY group I family. In terms of assembly, interacts with IKU1. Expressed in male gametophytes (pollen) and in the endosperm of fertilized ovules.

It localises to the nucleus. In terms of biological role, transcription factor. Interacts specifically with the W box (5'-(T)TGAC[CT]-3'), a frequently occurring elicitor-responsive cis-acting element. Modulates seed size by negatively regulating the cellularization of syncytial endosperm. The protein is Probable WRKY transcription factor 10 (WRKY10) of Arabidopsis thaliana (Mouse-ear cress).